The chain runs to 349 residues: DNA-directed RNA polymerase subunit alpha (349 aa).

The tract at residues 1–226 (MLIAQRPTLV…GLFGLAQELN (226 aa)) is alpha N-terminal domain (alpha-NTD). An alpha C-terminal domain (alpha-CTD) region spans residues 241–349 (AALAADLALP…GAEFVETEQY (109 aa)). Residues 308 to 349 (LKDSPPGFDPRQAVDTYGTDSYNPAFSDPSDDGAEFVETEQY) are disordered. Residues 336 to 349 (PSDDGAEFVETEQY) are compositionally biased toward acidic residues.

It belongs to the RNA polymerase alpha chain family. As to quaternary structure, homodimer. The RNAP catalytic core consists of 2 alpha, 1 beta, 1 beta' and 1 omega subunit. When a sigma factor is associated with the core the holoenzyme is formed, which can initiate transcription.

It catalyses the reaction RNA(n) + a ribonucleoside 5'-triphosphate = RNA(n+1) + diphosphate. DNA-dependent RNA polymerase catalyzes the transcription of DNA into RNA using the four ribonucleoside triphosphates as substrates. This Frankia alni (strain DSM 45986 / CECT 9034 / ACN14a) protein is DNA-directed RNA polymerase subunit alpha.